A 947-amino-acid chain; its full sequence is Protocadherin alpha-4 (947 aa).

The first 29 residues, 1–29 (MEFSWGSGQESRRLLLLLLLLAAWEAGNG), serve as a signal peptide directing secretion. Cadherin domains lie at 30–133 (QLHY…PPVF), 134–242 (PATQ…APAF), 243–350 (DRTI…VPDL), 351–455 (EFKS…APAF), 456–565 (AQPE…APAL), and 588–678 (GHVV…APKA). Topologically, residues 30-697 (QLHYSVSEEA…GPDAALVDVN (668 aa)) are extracellular. The cysteines at positions 96 and 102 are disulfide-linked. N-linked (GlcNAc...) asparagine glycans are attached at residues Asn139, Asn257, and Asn265. N-linked (GlcNAc...) asparagine glycosylation occurs at Asn548. Residues 698 to 718 (VYLIIAICAVSSLLVLTLLLY) traverse the membrane as a helical segment. Topologically, residues 719-947 (TALRCSALPT…GNSTTDNSDQ (229 aa)) are cytoplasmic. PXXP repeat units follow at residues 734–737 (PGKP), 774–777 (PSLP), 796–799 (PRQP), 829–832 (PGGP), 870–873 (PGNP), and 888–891 (PGSP). The tract at residues 734–891 (PGKPTLVCSS…PDKFIIPGSP (158 aa)) is 6 X 4 AA repeats of P-X-X-P. The interval 738–947 (TLVCSSAVGS…GNSTTDNSDQ (210 aa)) is required for interaction with FYN. Disordered stretches follow at residues 754–805 (RRPR…DWRY), 828–853 (GPGG…EVSP), and 868–947 (YGPG…NSDQ). Positions 906-920 (DKSDFITFGKKEETK) are enriched in basic and acidic residues.

Forms homodimers in trans (molecules expressed by two different cells). Forms promiscuous heterodimers in cis (at the plasma membrane of the same cell) with other protocadherins. Interacts with FYN.

The protein resides in the cell membrane. Functionally, calcium-dependent cell-adhesion protein involved in cells self-recognition and non-self discrimination. Thereby, it is involved in the establishment and maintenance of specific neuronal connections in the brain. The polypeptide is Protocadherin alpha-4 (Homo sapiens (Human)).